Here is a 177-residue protein sequence, read N- to C-terminus: Large ribosomal subunit protein uL6 (177 aa).

Belongs to the universal ribosomal protein uL6 family. In terms of assembly, part of the 50S ribosomal subunit.

Its function is as follows. This protein binds to the 23S rRNA, and is important in its secondary structure. It is located near the subunit interface in the base of the L7/L12 stalk, and near the tRNA binding site of the peptidyltransferase center. This is Large ribosomal subunit protein uL6 from Afipia carboxidovorans (strain ATCC 49405 / DSM 1227 / KCTC 32145 / OM5) (Oligotropha carboxidovorans).